Here is a 66-residue protein sequence, read N- to C-terminus: Small ribosomal subunit protein eS27 (66 aa).

Residues Cys-21, Cys-24, Cys-40, and Cys-43 each contribute to the Zn(2+) site. Residues 21-43 (CRQCNNEQVIFSNATFPVRCLSC) form a C4-type zinc finger.

This sequence belongs to the eukaryotic ribosomal protein eS27 family. As to quaternary structure, part of the 30S ribosomal subunit. Requires Zn(2+) as cofactor.

The sequence is that of Small ribosomal subunit protein eS27 from Sulfolobus acidocaldarius (strain ATCC 33909 / DSM 639 / JCM 8929 / NBRC 15157 / NCIMB 11770).